The following is a 304-amino-acid chain: Recombination-associated protein RdgC (304 aa).

It belongs to the RdgC family.

The protein resides in the cytoplasm. It is found in the nucleoid. In terms of biological role, may be involved in recombination. The chain is Recombination-associated protein RdgC from Shewanella baltica (strain OS195).